Here is a 523-residue protein sequence, read N- to C-terminus: GMP synthase [glutamine-hydrolyzing] (523 aa).

The Glutamine amidotransferase type-1 domain occupies 8–205; it reads KILILDFGSQ…VVNICGCTTN (198 aa). Residue cysteine 85 is the Nucleophile of the active site. Catalysis depends on residues histidine 179 and glutamate 181. One can recognise a GMPS ATP-PPase domain in the interval 206-398; it reads WTPENIIEDA…LGLPAEMLNR (193 aa). Residue 233 to 239 coordinates ATP; that stretch reads SGGVDSS.

Homodimer.

The catalysed reaction is XMP + L-glutamine + ATP + H2O = GMP + L-glutamate + AMP + diphosphate + 2 H(+). The protein operates within purine metabolism; GMP biosynthesis; GMP from XMP (L-Gln route): step 1/1. Catalyzes the synthesis of GMP from XMP. This Mannheimia succiniciproducens (strain KCTC 0769BP / MBEL55E) protein is GMP synthase [glutamine-hydrolyzing].